The primary structure comprises 352 residues: Heat-inducible transcription repressor HrcA (352 aa).

This sequence belongs to the HrcA family.

Functionally, negative regulator of class I heat shock genes (grpE-dnaK-dnaJ and groELS operons). Prevents heat-shock induction of these operons. This is Heat-inducible transcription repressor HrcA from Chlorobium phaeobacteroides (strain BS1).